We begin with the raw amino-acid sequence, 156 residues long: Ribosomal RNA large subunit methyltransferase H (156 aa).

S-adenosyl-L-methionine-binding positions include Leu-73, Gly-104, and 123–128 (LSPLTL).

The protein belongs to the RNA methyltransferase RlmH family. Homodimer.

It localises to the cytoplasm. The enzyme catalyses pseudouridine(1915) in 23S rRNA + S-adenosyl-L-methionine = N(3)-methylpseudouridine(1915) in 23S rRNA + S-adenosyl-L-homocysteine + H(+). Specifically methylates the pseudouridine at position 1915 (m3Psi1915) in 23S rRNA. The polypeptide is Ribosomal RNA large subunit methyltransferase H (Photorhabdus laumondii subsp. laumondii (strain DSM 15139 / CIP 105565 / TT01) (Photorhabdus luminescens subsp. laumondii)).